The following is a 135-amino-acid chain: Rheacalcin-1 (135 aa).

3 cysteine pairs are disulfide-bonded: cysteine 6/cysteine 17, cysteine 34/cysteine 131, and cysteine 106/cysteine 123. In terms of domain architecture, C-type lectin spans 13 to 132 (FRGNCYGYFR…CSERNAFICK (120 aa)).

Its subcellular location is the secreted. The protein resides in the extracellular space. It is found in the extracellular matrix. This Rhea americana (Greater rhea) protein is Rheacalcin-1.